The sequence spans 521 residues: Glutamate--tRNA ligase (521 aa).

Positions 30 to 40 (PSPTGYLHVGG) match the 'HIGH' region motif. The short motif at 277–281 (KLSKR) is the 'KMSKS' region element. Lysine 280 is an ATP binding site.

It belongs to the class-I aminoacyl-tRNA synthetase family. Glutamate--tRNA ligase type 1 subfamily. As to quaternary structure, monomer.

It is found in the cytoplasm. The enzyme catalyses tRNA(Glu) + L-glutamate + ATP = L-glutamyl-tRNA(Glu) + AMP + diphosphate. Its function is as follows. Catalyzes the attachment of glutamate to tRNA(Glu) in a two-step reaction: glutamate is first activated by ATP to form Glu-AMP and then transferred to the acceptor end of tRNA(Glu). The chain is Glutamate--tRNA ligase from Chlorobium phaeovibrioides (strain DSM 265 / 1930) (Prosthecochloris vibrioformis (strain DSM 265)).